Here is a 593-residue protein sequence, read N- to C-terminus: Arginine--tRNA ligase (593 aa).

Positions 138–148 (ANPTGPLHVGH) match the 'HIGH' region motif.

The protein belongs to the class-I aminoacyl-tRNA synthetase family. In terms of assembly, monomer.

The protein resides in the cytoplasm. The catalysed reaction is tRNA(Arg) + L-arginine + ATP = L-arginyl-tRNA(Arg) + AMP + diphosphate. This chain is Arginine--tRNA ligase, found in Burkholderia cenocepacia (strain ATCC BAA-245 / DSM 16553 / LMG 16656 / NCTC 13227 / J2315 / CF5610) (Burkholderia cepacia (strain J2315)).